Reading from the N-terminus, the 198-residue chain is MSTNDTRIYLASGSPRRREILEQLGLHLERIHADIDESVRPGEDAVAYTERLAREKAEAGWRVVSSCGLPERPLLAADTTVSQDGEIFGKPEDADDARRMLRAFSGRSHQAITSVAVRDGGKLLVKTSITDVFFKSLSDAEIERYIASGEPFDKAGAYGIQGKAGVFVEHIEGSYTGVMGLPVHETALLLAEFGFELP.

Asp-78 (proton acceptor) is an active-site residue.

It belongs to the Maf family. YhdE subfamily. It depends on a divalent metal cation as a cofactor.

It localises to the cytoplasm. It carries out the reaction dTTP + H2O = dTMP + diphosphate + H(+). The enzyme catalyses UTP + H2O = UMP + diphosphate + H(+). Its function is as follows. Nucleoside triphosphate pyrophosphatase that hydrolyzes dTTP and UTP. May have a dual role in cell division arrest and in preventing the incorporation of modified nucleotides into cellular nucleic acids. This is dTTP/UTP pyrophosphatase from Chromobacterium violaceum (strain ATCC 12472 / DSM 30191 / JCM 1249 / CCUG 213 / NBRC 12614 / NCIMB 9131 / NCTC 9757 / MK).